A 266-amino-acid chain; its full sequence is Large ribosomal subunit protein eL8 (266 aa).

Residues lysine 11, lysine 20, and lysine 21 each participate in a glycyl lysine isopeptide (Lys-Gly) (interchain with G-Cter in SUMO2) cross-link. The residue at position 34 (lysine 34) is an N6-acetyllysine. Lysine 48 participates in a covalent cross-link: Glycyl lysine isopeptide (Lys-Gly) (interchain with G-Cter in SUMO2). Lysine 97 bears the N6-acetyllysine; alternate mark. Residue lysine 97 forms a Glycyl lysine isopeptide (Lys-Gly) (interchain with G-Cter in SUMO2); alternate linkage. Lysine 125 is covalently cross-linked (Glycyl lysine isopeptide (Lys-Gly) (interchain with G-Cter in SUMO2)). Lysine 217 carries the N6-acetyllysine modification. Residue lysine 245 forms a Glycyl lysine isopeptide (Lys-Gly) (interchain with G-Cter in SUMO2) linkage.

This sequence belongs to the eukaryotic ribosomal protein eL8 family. Component of the large ribosomal subunit. Interacts with CRY1. Interacts with DICER1, AGO2, TARBP2, MOV10 and EIF6; they form a large RNA-induced silencing complex (RISC).

The protein localises to the cytoplasm. Its function is as follows. Component of the large ribosomal subunit. The ribosome is a large ribonucleoprotein complex responsible for the synthesis of proteins in the cell. The polypeptide is Large ribosomal subunit protein eL8 (Rpl7a) (Rattus norvegicus (Rat)).